Consider the following 231-residue polypeptide: Large ribosomal subunit protein uL1 (231 aa).

Belongs to the universal ribosomal protein uL1 family. Part of the 50S ribosomal subunit.

Its function is as follows. Binds directly to 23S rRNA. The L1 stalk is quite mobile in the ribosome, and is involved in E site tRNA release. Functionally, protein L1 is also a translational repressor protein, it controls the translation of the L11 operon by binding to its mRNA. This chain is Large ribosomal subunit protein uL1, found in Ectopseudomonas mendocina (strain ymp) (Pseudomonas mendocina).